The primary structure comprises 113 residues: Ribonuclease P protein component (113 aa).

Belongs to the RnpA family. Consists of a catalytic RNA component (M1 or rnpB) and a protein subunit.

It carries out the reaction Endonucleolytic cleavage of RNA, removing 5'-extranucleotides from tRNA precursor.. RNaseP catalyzes the removal of the 5'-leader sequence from pre-tRNA to produce the mature 5'-terminus. It can also cleave other RNA substrates such as 4.5S RNA. The protein component plays an auxiliary but essential role in vivo by binding to the 5'-leader sequence and broadening the substrate specificity of the ribozyme. The sequence is that of Ribonuclease P protein component from Vesicomyosocius okutanii subsp. Calyptogena okutanii (strain HA).